Reading from the N-terminus, the 802-residue chain is MRFLQVYKSSALIGLIILLASKVNLAEAKRKLVATSLVTCMENSQLSANSFDVVFNPDDRSLHYDLDMSTQIDSYIFADIDVYAYGFKIITKNVDLCSINWKQFCPVHPGNIQIDSIEYISSEYVNEIPGIAYQVPDIDAYARVKITNNVSEYLACIQIYFSNGKTVSQIGVKWATAVVAGIGLLLSAILSTFGNSTAASHISANTMSLFLYFQSVVVVAMQHVHRVPPIAAAWAENLVWSMGLIRISFMQRIFRWYVQSTGGTPSLYLTSTSMSVLAQRSWQYLMELPLIKRATNVLYGNANTLIFRGIKRLGYKMGIENTSIVCTGFTFFVLCGYVLAGFIIVFKCCVELATRLGWIQKARFWEFRKQWRMILKGALLRYIYIGFVQLTILSFWEFTERDSPAVIVIACLFILLSCGLMLWAAWRTVFFARRSVALYNNPAALLYGDEYVLHKYGFFYTMFNANHYWWNIVLLSYIFVKSLLVGFAQASGQTQVLFMFILDLFYFVAIIYYKPYLDRPTNIMNILIATVTVVNSFLFMFFSDLFNQSYKVAAIMGWIFFIMNAAFSFILLMMILAFAGMMLFSKNPDLRFKPAKDDRTSFQRNTMKPEGTVNRSVANELLALGNVAKDHDDNSDYESNDTGVNDELKQAQDETTPTTVTSSDDNKPTFSEKILSKFSRPKNENASTDALRVEAPKQQTFPHNLTNLSRENLSTLGSKPYPGHTRSQSDAHNGLINSFEEEDTSSNTDPFHDSTEGDLLDTSSSDGGFRSQNYVRDDSINSLGNNKQPLRKPPGFFDEGFM.

The N-terminal stretch at 1–28 (MRFLQVYKSSALIGLIILLASKVNLAEA) is a signal peptide. At 29-169 (KRKLVATSLV…YFSNGKTVSQ (141 aa)) the chain is on the lumenal side. Asparagine 149 carries an N-linked (GlcNAc...) asparagine glycan. The helical transmembrane segment at 170 to 190 (IGVKWATAVVAGIGLLLSAIL) threads the bilayer. The Cytoplasmic segment spans residues 191 to 200 (STFGNSTAAS). Residues 201 to 221 (HISANTMSLFLYFQSVVVVAM) traverse the membrane as a helical segment. Over 222-229 (QHVHRVPP) the chain is Lumenal. The helical transmembrane segment at 230–250 (IAAAWAENLVWSMGLIRISFM) threads the bilayer. Topologically, residues 251 to 255 (QRIFR) are cytoplasmic. Residues 256–278 (WYVQSTGGTPSLYLTSTSMSVLA) form a helical membrane-spanning segment. Residues 279–323 (QRSWQYLMELPLIKRATNVLYGNANTLIFRGIKRLGYKMGIENTS) lie on the Lumenal side of the membrane. Asparagine 321 carries N-linked (GlcNAc...) asparagine glycosylation. Residues 324-344 (IVCTGFTFFVLCGYVLAGFII) form a helical membrane-spanning segment. Residues 345–377 (VFKCCVELATRLGWIQKARFWEFRKQWRMILKG) lie on the Cytoplasmic side of the membrane. Residues 378 to 398 (ALLRYIYIGFVQLTILSFWEF) traverse the membrane as a helical segment. At 399-405 (TERDSPA) the chain is on the lumenal side. Residues 406 to 426 (VIVIACLFILLSCGLMLWAAW) form a helical membrane-spanning segment. Over 427 to 467 (RTVFFARRSVALYNNPAALLYGDEYVLHKYGFFYTMFNANH) the chain is Cytoplasmic. A helical membrane pass occupies residues 468–488 (YWWNIVLLSYIFVKSLLVGFA). At 489-495 (QASGQTQ) the chain is on the lumenal side. A helical transmembrane segment spans residues 496-516 (VLFMFILDLFYFVAIIYYKPY). At 517–525 (LDRPTNIMN) the chain is on the cytoplasmic side. The helical transmembrane segment at 526-546 (ILIATVTVVNSFLFMFFSDLF) threads the bilayer. Residue asparagine 547 is glycosylated (N-linked (GlcNAc...) asparagine). Residues 547-557 (NQSYKVAAIMG) are Lumenal-facing. Residues 558–578 (WIFFIMNAAFSFILLMMILAF) form a helical membrane-spanning segment. Topologically, residues 579 to 802 (AGMMLFSKNP…PPGFFDEGFM (224 aa)) are cytoplasmic. Phosphoserine is present on residues serine 616 and serine 635. The interval 629 to 802 (KDHDDNSDYE…PPGFFDEGFM (174 aa)) is disordered. Composition is skewed to polar residues over residues 653-663 (DETTPTTVTSS), 697-717 (KQQT…STLG), and 761-788 (DTSS…NNKQ). Residues serine 779 and serine 782 each carry the phosphoserine modification.

Belongs to the transient receptor potential (TRP) ion channel family.

It is found in the endoplasmic reticulum membrane. Functionally, may be responsible for the transport of FAD into the endoplasmic reticulum lumen, where it is required for oxidative protein folding. The polypeptide is Putative flavin carrier protein 3 (FLC3) (Saccharomyces cerevisiae (strain ATCC 204508 / S288c) (Baker's yeast)).